The primary structure comprises 368 residues: 3-dehydroquinate synthase (368 aa).

NAD(+) is bound by residues 71–76, 105–109, 129–130, Lys-142, Lys-151, and 169–172; these read DGEAFK, GVVGD, TT, and TLRT. Residues Glu-184, His-247, and His-264 each contribute to the Zn(2+) site.

This sequence belongs to the sugar phosphate cyclases superfamily. Dehydroquinate synthase family. Requires Co(2+) as cofactor. Zn(2+) serves as cofactor. NAD(+) is required as a cofactor.

The protein localises to the cytoplasm. It carries out the reaction 7-phospho-2-dehydro-3-deoxy-D-arabino-heptonate = 3-dehydroquinate + phosphate. It functions in the pathway metabolic intermediate biosynthesis; chorismate biosynthesis; chorismate from D-erythrose 4-phosphate and phosphoenolpyruvate: step 2/7. Catalyzes the conversion of 3-deoxy-D-arabino-heptulosonate 7-phosphate (DAHP) to dehydroquinate (DHQ). This chain is 3-dehydroquinate synthase, found in Cupriavidus pinatubonensis (strain JMP 134 / LMG 1197) (Cupriavidus necator (strain JMP 134)).